The chain runs to 143 residues: Large-conductance mechanosensitive channel (143 aa).

2 consecutive transmembrane segments (helical) span residues 16–36 (VIDL…VTAL) and 84–104 (INTV…VKLI).

It belongs to the MscL family. In terms of assembly, homopentamer.

The protein localises to the cell inner membrane. In terms of biological role, channel that opens in response to stretch forces in the membrane lipid bilayer. May participate in the regulation of osmotic pressure changes within the cell. This is Large-conductance mechanosensitive channel from Xanthomonas campestris pv. campestris (strain 8004).